The following is a 940-amino-acid chain: Protein translocase subunit SecA (940 aa).

ATP contacts are provided by residues glutamine 87, 105–109, and aspartate 494; that span reads GEGKT. Residues 879-940 are disordered; the sequence is AQQQKKAVEG…KCHGASEASV (62 aa). The segment covering 884–898 has biased composition (basic and acidic residues); it reads KAVEGRATADGKLDE. The segment covering 900-915 has biased composition (low complexity); the sequence is SVAAAARPAAASRPAV. Residues cysteine 921, cysteine 923, cysteine 932, and histidine 933 each contribute to the Zn(2+) site.

Belongs to the SecA family. Monomer and homodimer. Part of the essential Sec protein translocation apparatus which comprises SecA, SecYEG and auxiliary proteins SecDF-YajC and YidC. Zn(2+) serves as cofactor.

Its subcellular location is the cell inner membrane. It is found in the cytoplasm. It carries out the reaction ATP + H2O + cellular proteinSide 1 = ADP + phosphate + cellular proteinSide 2.. In terms of biological role, part of the Sec protein translocase complex. Interacts with the SecYEG preprotein conducting channel. Has a central role in coupling the hydrolysis of ATP to the transfer of proteins into and across the cell membrane, serving as an ATP-driven molecular motor driving the stepwise translocation of polypeptide chains across the membrane. In Myxococcus xanthus (strain DK1622), this protein is Protein translocase subunit SecA.